Consider the following 252-residue polypeptide: LexA repressor (252 aa).

Residues 1–46 (MPEENRGGHQPYTEESSVSALHPVRTDDSVGSSAEQTGDAPTLTER) form a disordered region. A DNA-binding region (H-T-H motif) is located at residues 67–87 (IREIGEAVGLSSPSSVAHQLK). Residues serine 176 and lysine 213 each act as for autocatalytic cleavage activity in the active site.

The protein belongs to the peptidase S24 family. As to quaternary structure, homodimer.

The catalysed reaction is Hydrolysis of Ala-|-Gly bond in repressor LexA.. Represses a number of genes involved in the response to DNA damage (SOS response), including recA and lexA. In the presence of single-stranded DNA, RecA interacts with LexA causing an autocatalytic cleavage which disrupts the DNA-binding part of LexA, leading to derepression of the SOS regulon and eventually DNA repair. This is LexA repressor from Thermobifida fusca (strain YX).